The sequence spans 361 residues: 3-dehydroquinate synthase (361 aa).

NAD(+)-binding positions include Ser-72–Lys-77, Thr-130–Thr-131, Lys-142, and Lys-151. Residues Glu-184, His-247, and His-264 each coordinate Zn(2+).

The protein belongs to the sugar phosphate cyclases superfamily. Dehydroquinate synthase family. Co(2+) is required as a cofactor. Zn(2+) serves as cofactor. Requires NAD(+) as cofactor.

The protein localises to the cytoplasm. It catalyses the reaction 7-phospho-2-dehydro-3-deoxy-D-arabino-heptonate = 3-dehydroquinate + phosphate. It functions in the pathway metabolic intermediate biosynthesis; chorismate biosynthesis; chorismate from D-erythrose 4-phosphate and phosphoenolpyruvate: step 2/7. Functionally, catalyzes the conversion of 3-deoxy-D-arabino-heptulosonate 7-phosphate (DAHP) to dehydroquinate (DHQ). The chain is 3-dehydroquinate synthase from Bacillus mycoides (strain KBAB4) (Bacillus weihenstephanensis).